Reading from the N-terminus, the 403-residue chain is Nucleoporin nup44 (403 aa).

Polar residues-rich tracts occupy residues 1–31 (MAFS…TTKP) and 67–124 (FGKT…DETN). The segment at 1-124 (MAFSFGQQGS…NPTKPVDETN (124 aa)) is disordered.

It is found in the cytoplasm. It localises to the nucleus. Functions as a component of the nuclear pore complex (NPC). NPC components, collectively referred to as nucleoporins (NUPs), can play the role of both NPC structural components and of docking or interaction partners for transiently associated nuclear transport factors. Active directional transport is assured by both, a Phe-Gly (FG) repeat affinity gradient for these transport factors across the NPC and a transport cofactor concentration gradient across the nuclear envelope. This chain is Nucleoporin nup44 (nup44), found in Schizosaccharomyces pombe (strain 972 / ATCC 24843) (Fission yeast).